We begin with the raw amino-acid sequence, 292 residues long: Protease HtpX homolog (292 aa).

Transmembrane regions (helical) follow at residues 9 to 29 (TGVL…VLGN) and 31 to 51 (TGMM…YWYS). H133 is a binding site for Zn(2+). E134 is a catalytic residue. H137 is a Zn(2+) binding site. The next 2 membrane-spanning stretches (helical) occupy residues 148–168 (LAAV…WMLW) and 185–205 (LGAI…QMAI). E210 lines the Zn(2+) pocket.

This sequence belongs to the peptidase M48B family. Zn(2+) is required as a cofactor.

It localises to the cell membrane. The polypeptide is Protease HtpX homolog (Thermococcus sibiricus (strain DSM 12597 / MM 739)).